The chain runs to 1438 residues: Lysophospholipase NTE1 (1438 aa).

Topologically, residues 1–25 are cytoplasmic; sequence MDSDTSSADFHSTETLVSTPKYSYG. Residues 26–46 form a helical membrane-spanning segment; sequence VLINVILLVSWTCFRVVNWFL. Topologically, residues 47-64 are lumenal; that stretch reads VTLPSILLGMLSKTFQIT. Residues 65–85 form a helical membrane-spanning segment; that stretch reads LSLSSILMFVVAVTAICFLVV. The Cytoplasmic portion of the chain corresponds to 86 to 1438; it reads RYKYLTRYSR…HVSLSRRNSI (1353 aa). Polar residues predominate over residues 432-450; the sequence is YETQTIPNESEDSPTIQRS. Residues 432-464 are disordered; that stretch reads YETQTIPNESEDSPTIQRSSLRRRASHSTSLRK. A nucleoside 3',5'-cyclic phosphate is bound by residues 590–720 and 707–856; these read GDDS…LTID and RLKR…VANR. The region spanning 1131 to 1295 is the PNPLA domain; it reads LVLGGGGSRG…LDNLPVSEMK (165 aa). The short motif at 1135–1140 is the GXGXXG element; sequence GGGSRG. Residues 1162–1166 carry the GXSXG motif; the sequence is GTSIG. Serine 1164 serves as the catalytic Nucleophile. The active-site Proton acceptor is aspartate 1282. Positions 1282 to 1284 match the DGA/G motif; sequence DGG.

It belongs to the NTE family.

Its subcellular location is the endoplasmic reticulum membrane. It carries out the reaction a 1-acyl-sn-glycero-3-phosphocholine + H2O = sn-glycerol 3-phosphocholine + a fatty acid + H(+). Its activity is regulated as follows. Inhibited by organophosphorus esters. Its function is as follows. Intracellular phospholipase B that catalyzes the double deacylation of phosphatidylcholine (PC) to glycerophosphocholine (GroPCho). Plays an important role in membrane lipid homeostasis. Responsible for the rapid PC turnover in response to inositol, elevated temperatures, or when choline is present in the growth medium. This chain is Lysophospholipase NTE1 (NTE1), found in Meyerozyma guilliermondii (strain ATCC 6260 / CBS 566 / DSM 6381 / JCM 1539 / NBRC 10279 / NRRL Y-324) (Yeast).